The chain runs to 88 residues: UPF0250 protein Swoo_3713 (88 aa).

It belongs to the UPF0250 family.

The chain is UPF0250 protein Swoo_3713 from Shewanella woodyi (strain ATCC 51908 / MS32).